The chain runs to 181 residues: Adenylyl-sulfate kinase (181 aa).

12–19 lines the ATP pocket; sequence GLSGAGKT. Ser-86 (phosphoserine intermediate) is an active-site residue.

The protein belongs to the APS kinase family.

The catalysed reaction is adenosine 5'-phosphosulfate + ATP = 3'-phosphoadenylyl sulfate + ADP + H(+). Its pathway is sulfur metabolism; hydrogen sulfide biosynthesis; sulfite from sulfate: step 2/3. In terms of biological role, catalyzes the synthesis of activated sulfate. This is Adenylyl-sulfate kinase from Rippkaea orientalis (strain PCC 8801 / RF-1) (Cyanothece sp. (strain PCC 8801)).